The following is a 574-amino-acid chain: Zinc finger and BTB domain-containing protein 3 (574 aa).

Residues 74–142 enclose the BTB domain; it reads CDCTVMVGST…MYAGQLTLRG (69 aa). Disordered stretches follow at residues 175 to 277 and 305 to 346; these read AEAD…SSTE and SLRV…APAP. Residues lysine 181 and lysine 182 each participate in a glycyl lysine isopeptide (Lys-Gly) (interchain with G-Cter in SUMO2) cross-link. Polar residues predominate over residues 187–212; it reads NSQLPSLEFLSSTSRGTQPSLASAET. Residues 323-334 show a composition bias toward low complexity; it reads PPASAPTSAPAP. Serine 362 is modified (phosphoserine). The segment at 364–403 is disordered; it reads EETDVSDEQPQGPERAFPSGGAVYGAQPSQPEAFEDPGAA. 2 C2H2-type zinc fingers span residues 472–494 and 500–523; these read PTCK…ATVH and YECR…RKAH. Residues 526 to 535 are compositionally biased toward basic and acidic residues; that stretch reads DLAKRSKPDP. A disordered region spans residues 526 to 574; that stretch reads DLAKRSKPDPEVGPLLGVQPLPGSPTADRQSSSGGGPPKDFVLAPKTNI. Lysine 532 participates in a covalent cross-link: Glycyl lysine isopeptide (Lys-Gly) (interchain with G-Cter in SUMO2). Position 549 is a phosphoserine (serine 549).

The protein localises to the nucleus. May be involved in transcriptional regulation. The polypeptide is Zinc finger and BTB domain-containing protein 3 (ZBTB3) (Homo sapiens (Human)).